We begin with the raw amino-acid sequence, 607 residues long: 1-deoxy-D-xylulose-5-phosphate synthase (607 aa).

Thiamine diphosphate contacts are provided by residues H63 and 104 to 106; that span reads GHS. D135 is a Mg(2+) binding site. Thiamine diphosphate-binding positions include 136–137, N164, Y271, and E351; that span reads GA. A Mg(2+)-binding site is contributed by N164.

The protein belongs to the transketolase family. DXPS subfamily. Homodimer. It depends on Mg(2+) as a cofactor. Requires thiamine diphosphate as cofactor.

It catalyses the reaction D-glyceraldehyde 3-phosphate + pyruvate + H(+) = 1-deoxy-D-xylulose 5-phosphate + CO2. It participates in metabolic intermediate biosynthesis; 1-deoxy-D-xylulose 5-phosphate biosynthesis; 1-deoxy-D-xylulose 5-phosphate from D-glyceraldehyde 3-phosphate and pyruvate: step 1/1. Functionally, catalyzes the acyloin condensation reaction between C atoms 2 and 3 of pyruvate and glyceraldehyde 3-phosphate to yield 1-deoxy-D-xylulose-5-phosphate (DXP). The polypeptide is 1-deoxy-D-xylulose-5-phosphate synthase (Campylobacter hominis (strain ATCC BAA-381 / DSM 21671 / CCUG 45161 / LMG 19568 / NCTC 13146 / CH001A)).